Consider the following 263-residue polypeptide: Tryptophan synthase alpha chain (263 aa).

Active-site proton acceptor residues include E50 and D61.

Belongs to the TrpA family. Tetramer of two alpha and two beta chains.

It catalyses the reaction (1S,2R)-1-C-(indol-3-yl)glycerol 3-phosphate + L-serine = D-glyceraldehyde 3-phosphate + L-tryptophan + H2O. Its pathway is amino-acid biosynthesis; L-tryptophan biosynthesis; L-tryptophan from chorismate: step 5/5. Functionally, the alpha subunit is responsible for the aldol cleavage of indoleglycerol phosphate to indole and glyceraldehyde 3-phosphate. This is Tryptophan synthase alpha chain from Clostridium acetobutylicum (strain ATCC 824 / DSM 792 / JCM 1419 / IAM 19013 / LMG 5710 / NBRC 13948 / NRRL B-527 / VKM B-1787 / 2291 / W).